Reading from the N-terminus, the 351-residue chain is Tsukushi-A (351 aa).

Positions 1 to 17 (MALSSWIFFLLVHGIVG) are cleaved as a signal peptide. LRR repeat units follow at residues 59–82 (PLDT…VLSG), 85–108 (YTTL…TFSK), 109–132 (LRYL…SFLY), 134–155 (RLTE…AFTL), 158–181 (QGRS…AERP), 182–203 (VPNI…DLHG), 204–226 (IPLR…SFLG), 252–276 (LTSL…MFFG), and 277–300 (LKAL…IMLH).

As to quaternary structure, interacts with bmp4. Interacts with dll1 (via extracellular region). Interacts with fgf8; inhibits fgf8 signaling. Interacts with nodal2/Xnr2; enhances nodal2 activity. During embryogenesis, localized to the animal hemisphere during late blastula and gastrula stages. At stage 10, expression is also detected around the dorsal blastopore lip. Expressed in the mandibular crest segment, branchial crest segment and differentiating somites at stage 21/22. Expressed in the germ ring including the shield at shield stage and in the tailbud at the 10-somite stage. At the early neurula stage (stage 13), expression is hardly detectable in the presumptive neural plate region, and restricted to the non-neural ectoderm where its levels increase by stage 14, especially in the presumptive anterior neural fold. Also expressed in the prospective cranial neural crest. At the early tailbud stage (stage 23), expressed in cranial neural crest cells, the dorsal retina and the lens placode.

It is found in the secreted. Contributes to various developmental events through its interactions with multiple signaling pathways. Dorsalizing factor which functions as an inhibitor of bone morphogenetic proteins (BMP) during gastrulation. Promotes dll1-dependent activation of Notch signaling and is required for neural crest formation. Induces endoderm and dorsal mesoderm formation by enhancing nodal2/Xnr2 activity while inhibiting ventrolateral mesoderm formation through inhibition of fgf8. In Xenopus laevis (African clawed frog), this protein is Tsukushi-A.